The chain runs to 839 residues: LPS-assembly protein LptD (839 aa).

An N-terminal signal peptide occupies residues 1–21 (MAIGITACVLSLINYQGLAYS).

Belongs to the LptD family. In terms of assembly, component of the lipopolysaccharide transport and assembly complex. Interacts with LptE and LptA.

The protein localises to the cell outer membrane. Together with LptE, is involved in the assembly of lipopolysaccharide (LPS) at the surface of the outer membrane. The sequence is that of LPS-assembly protein LptD from Legionella pneumophila subsp. pneumophila (strain Philadelphia 1 / ATCC 33152 / DSM 7513).